A 182-amino-acid chain; its full sequence is Dirigent protein 1 (182 aa).

The N-terminal stretch at 1-24 (MAKRFLLLLPLLSSILLLAVSVTA) is a signal peptide. The N-linked (GlcNAc...) asparagine glycan is linked to N125.

Belongs to the plant dirigent protein family. As to quaternary structure, homodimer.

Its subcellular location is the secreted. The protein resides in the extracellular space. It localises to the apoplast. Its function is as follows. Dirigent proteins impart stereoselectivity on the phenoxy radical-coupling reaction, yielding optically active lignans from two molecules of coniferyl alcohol in the biosynthesis of lignans, flavonolignans, and alkaloids and thus plays a central role in plant secondary metabolism. In Arabidopsis thaliana (Mouse-ear cress), this protein is Dirigent protein 1 (DIR1).